Consider the following 221-residue polypeptide: Phosphate-specific transport system accessory protein PhoU homolog 1 (221 aa).

Belongs to the PhoU family. As to quaternary structure, homodimer.

Its subcellular location is the cytoplasm. Plays a role in the regulation of phosphate uptake. In this role, it may bind, possibly as a chaperone, to PhoR, PhoP or a PhoR-PhoP complex to promote dephosphorylation of phospho-PhoP, or inhibit formation of the PhoR-PhoP transitory complex. The sequence is that of Phosphate-specific transport system accessory protein PhoU homolog 1 (phoU1) from Mycobacterium bovis (strain ATCC BAA-935 / AF2122/97).